Consider the following 844-residue polypeptide: Beta-mannosidase B (844 aa).

E432 (proton donor) is an active-site residue. N-linked (GlcNAc...) asparagine glycosylation occurs at N723.

It belongs to the glycosyl hydrolase 2 family. Beta-mannosidase B subfamily.

It carries out the reaction Hydrolysis of terminal, non-reducing beta-D-mannose residues in beta-D-mannosides.. It functions in the pathway glycan metabolism; N-glycan degradation. Its function is as follows. Exoglycosidase that cleaves the single beta-linked mannose residue from the non-reducing end of beta-mannosidic oligosaccharides of various complexity and length. Prefers mannobiose over mannotriose and has no activity against polymeric mannan. Is also severely restricted by galactosyl substitutions at the +1 subsite. This chain is Beta-mannosidase B (mndB), found in Aspergillus niger (strain ATCC MYA-4892 / CBS 513.88 / FGSC A1513).